We begin with the raw amino-acid sequence, 238 residues long: MKKTVVASTLAVGLGVTGFAAGNSADASEQGVDKAQLAQQAQSNPESLNEAPVQDGAYNINFNYNNTDYSFQSDGQYWTWSYGQGSTNAPAQETAEQPQQVEQPQQTEQASTEQPAEEAAPQTEETQQPQQEATTQTTSSSNESTSNESSSSEASEGSSVNVNSHLQAIAQRESGGDLKAVNPSSGAAGKYQFLQSTWDSVAPSEYQGVSPTEAPEAVQDAAAVKLYNTAGASQWVTA.

The N-terminal stretch at methionine 1–alanine 27 is a signal peptide. The segment at tyrosine 82 to asparagine 161 is disordered. Residues alanine 89–glutamate 156 are compositionally biased toward low complexity.

The protein belongs to the transglycosylase family. SceD subfamily.

The protein localises to the secreted. In terms of biological role, is able to cleave peptidoglycan and affects clumping and separation of bacterial cells. This Staphylococcus saprophyticus subsp. saprophyticus (strain ATCC 15305 / DSM 20229 / NCIMB 8711 / NCTC 7292 / S-41) protein is Probable transglycosylase SceD 3 (sceD3).